The chain runs to 291 residues: ATP synthase gamma chain (291 aa).

It belongs to the ATPase gamma chain family. As to quaternary structure, F-type ATPases have 2 components, CF(1) - the catalytic core - and CF(0) - the membrane proton channel. CF(1) has five subunits: alpha(3), beta(3), gamma(1), delta(1), epsilon(1). CF(0) has three main subunits: a, b and c.

It is found in the cell inner membrane. Produces ATP from ADP in the presence of a proton gradient across the membrane. The gamma chain is believed to be important in regulating ATPase activity and the flow of protons through the CF(0) complex. This is ATP synthase gamma chain from Burkholderia multivorans (strain ATCC 17616 / 249).